A 118-amino-acid polypeptide reads, in one-letter code: UPF0102 protein STH1475 (118 aa).

This sequence belongs to the UPF0102 family.

This is UPF0102 protein STH1475 from Symbiobacterium thermophilum (strain DSM 24528 / JCM 14929 / IAM 14863 / T).